Reading from the N-terminus, the 326-residue chain is Archaeal actin homolog (326 aa).

Residues 10 to 14 (YGDTK), S179, Q231, 285 to 288 (GGSN), and Q311 each bind ATP.

Belongs to the thermophilic archaeal actin family.

Polymerizes into bundles of filaments, forming a helix with a filament width of 5.5 nm and an axial repeating unit of 5.5 nm. Polymerization of Ta0583 requires NTP and is optimal with ATP, but GTP, UTP, CTP, and even the deoxy form of NTP can also support the polymerization reaction. Nucleoside diphosphate or AMP-PNP does not support polymerization. This is Archaeal actin homolog from Thermoplasma acidophilum (strain ATCC 25905 / DSM 1728 / JCM 9062 / NBRC 15155 / AMRC-C165).